We begin with the raw amino-acid sequence, 280 residues long: uncharacterized protein (280 aa).

2 disordered regions span residues 1 to 124 (MPRD…QREA) and 177 to 280 (LEEE…LSSK). 2 stretches are compositionally biased toward basic residues: residues 16–36 (SRRR…RSRR) and 48–83 (YSRR…RQKS). Basic and acidic residues-rich tracts occupy residues 102–124 (AKNR…QREA) and 182–259 (EASL…ERLK).

This is an uncharacterized protein from Arabidopsis thaliana (Mouse-ear cress).